The following is a 338-amino-acid chain: Bacteriochlorophyllide d C-20 methyltransferase (338 aa).

Glu147 contacts S-adenosyl-L-methionine. His150 is a binding site for substrate. Residues Gly177, Asn200, 227–228 (DI), and 242–243 (CR) each bind S-adenosyl-L-methionine. Tyr246 functions as the Nucleophile in the catalytic mechanism. His290 provides a ligand contact to a bacteriochlorophyll d.

This sequence belongs to the class I-like SAM-binding methyltransferase superfamily. Cation-independent O-methyltransferase family. As to quaternary structure, homodimer.

The enzyme catalyses a bacteriochlorophyllide d + S-adenosyl-L-methionine = a bacteriochlorophyllide c + S-adenosyl-L-homocysteine + H(+). The protein operates within porphyrin-containing compound metabolism; bacteriochlorophyll biosynthesis (light-independent). Involved in the biosynthesis of the major light-harvesting pigment bacteriochlorophyll c (BChlc), which confers a significant competitive advantage to green sulfur bacteria living at limiting red and near-infrared light intensities. Catalyzes the methylation at the C-20 position of the cyclic tetrapyrrole chlorin of bacteriochlorophyll d (BChld) to produce bacteriochlorophyll c (BChlc) using S-adenosylmethionine (SAM) as a methyl source. The protein is Bacteriochlorophyllide d C-20 methyltransferase of Chlorobaculum tepidum (strain ATCC 49652 / DSM 12025 / NBRC 103806 / TLS) (Chlorobium tepidum).